A 593-amino-acid chain; its full sequence is Aspartate--tRNA(Asp/Asn) ligase (593 aa).

Position 172 (E172) interacts with L-aspartate. The segment at 196–199 (QLFK) is aspartate. R218 serves as a coordination point for L-aspartate. Residues 218-220 (RDE) and Q227 each bind ATP. Residue H450 coordinates L-aspartate. E484 contacts ATP. An L-aspartate-binding site is contributed by R491. Position 536–539 (536–539 (GLDR)) interacts with ATP.

This sequence belongs to the class-II aminoacyl-tRNA synthetase family. Type 1 subfamily. In terms of assembly, homodimer.

The protein localises to the cytoplasm. The catalysed reaction is tRNA(Asx) + L-aspartate + ATP = L-aspartyl-tRNA(Asx) + AMP + diphosphate. Aspartyl-tRNA synthetase with relaxed tRNA specificity since it is able to aspartylate not only its cognate tRNA(Asp) but also tRNA(Asn). Reaction proceeds in two steps: L-aspartate is first activated by ATP to form Asp-AMP and then transferred to the acceptor end of tRNA(Asp/Asn). This chain is Aspartate--tRNA(Asp/Asn) ligase, found in Nitrosomonas europaea (strain ATCC 19718 / CIP 103999 / KCTC 2705 / NBRC 14298).